The following is a 179-amino-acid chain: UPF0227 protein Shewmr4_1727 (179 aa).

The protein belongs to the UPF0227 family.

This chain is UPF0227 protein Shewmr4_1727, found in Shewanella sp. (strain MR-4).